Here is a 302-residue protein sequence, read N- to C-terminus: MTDIAPDTGVLDDVVSAFQIENLPVRGRVVRLGAAIDEVLTRHDYPEPVANLLGEACALAALVGSSLKFEGRLIVQAQGDGPVRYVVVDYDTSGGLRGYCRFDPEEVAAVSEGFVRPGAKTLLGGGVFIMTLDQGPDMDRYQGVTPIEGETLALCAEQYFAQSEQTPTRVRLAVGQADTGQGATWRAGGILIQVIAGDQARGETQDAWTHVQALFETTGEDELIDPTVSTPTLLWRLFNEDGVRLLDEKPLKAFCRCSEDRIGVVMDSFSAEEVAEMVEPDGKIHVTCEYCSRIYKLDPPGA.

Disulfide bonds link C255-C257 and C288-C291.

Belongs to the HSP33 family. Post-translationally, under oxidizing conditions two disulfide bonds are formed involving the reactive cysteines. Under reducing conditions zinc is bound to the reactive cysteines and the protein is inactive.

The protein localises to the cytoplasm. Redox regulated molecular chaperone. Protects both thermally unfolding and oxidatively damaged proteins from irreversible aggregation. Plays an important role in the bacterial defense system toward oxidative stress. This is 33 kDa chaperonin from Caulobacter vibrioides (strain ATCC 19089 / CIP 103742 / CB 15) (Caulobacter crescentus).